The primary structure comprises 470 residues: Argininosuccinate lyase (470 aa).

It belongs to the lyase 1 family. Argininosuccinate lyase subfamily.

The protein resides in the cytoplasm. It catalyses the reaction 2-(N(omega)-L-arginino)succinate = fumarate + L-arginine. It functions in the pathway amino-acid biosynthesis; L-arginine biosynthesis; L-arginine from L-ornithine and carbamoyl phosphate: step 3/3. The polypeptide is Argininosuccinate lyase (Leptospira borgpetersenii serovar Hardjo-bovis (strain JB197)).